The following is an 817-amino-acid chain: CD177 antigen (817 aa).

Positions 1–21 (MNSIPVLTLLGVTALLPCVPA) are cleaved as a signal peptide. Residues 22–796 (LTCQKSSAQA…PSLAWTLRLS (775 aa)) are Extracellular-facing. N-linked (GlcNAc...) asparagine glycans are attached at residues Asn-115, Asn-189, Asn-379, and Asn-566. UPAR/Ly6 domains follow at residues 134–203 (CPLC…SENC), 322–393 (CRHC…REDC), 511–581 (CPLC…ERCS), and 705–774 (CPMC…AEES). A helical; Anchor for type IV membrane protein transmembrane segment spans residues 797–817 (AWMLGLSALLSSLYAGICPLC).

In terms of assembly, found in a complex with integrin ITGAM/CD11b and ITGB2/CD18. Interacts with PECAM1 (via Ig-like C2-type domain 6); the interaction is Ca(2+)-dependent; the interaction is direct. Interacts with serine protease PRTN3/myeloblastin; the interaction tethers PRTN3 to the cell surface; the interaction is direct. In terms of tissue distribution, expressed in neutrophils.

It localises to the cell membrane. In association with beta-2 integrin heterodimer ITGAM/CD11b and ITGB2/CD18, mediates activation of TNF-alpha primed neutrophils including degranulation and superoxide production. In addition, by preventing beta-2 integrin internalization and attenuating chemokine signaling favors adhesion over migration. Heterophilic interaction with PECAM1 on endothelial cells plays a role in neutrophil transendothelial migration in vitro. However, appears to be dispensable for neutrophil recruitment caused by bacterial infection in vivo. Acts as a receptor for the mature form of protease PRTN3 allowing its display at the cell surface of neutrophils. By displaying PRTN3 at the neutrophil cell surface, may play a role in enhancing endothelial cell junctional integrity and thus vascular integrity during neutrophil diapedesis. The protein is CD177 antigen (Cd177) of Mus musculus (Mouse).